A 177-amino-acid polypeptide reads, in one-letter code: MTKESLEKATFAGGCFWCMVKPFDTQPGIEKVVSGYTGGHTVNPTYKEVCSGTTGHTEAVEITFDPAVFPYEKLVEVYWQQTDPTDAAGQFVDRGDSYRPVIFYHNEEQRQIAEKSKAALDASGRFKKPVVTEIAKAETFYPAEEYHQDFYKKEKAHYEGYQVASGRAAFIDANWKG.

C15 is an active-site residue.

It belongs to the MsrA Met sulfoxide reductase family.

It carries out the reaction L-methionyl-[protein] + [thioredoxin]-disulfide + H2O = L-methionyl-(S)-S-oxide-[protein] + [thioredoxin]-dithiol. The catalysed reaction is [thioredoxin]-disulfide + L-methionine + H2O = L-methionine (S)-S-oxide + [thioredoxin]-dithiol. Has an important function as a repair enzyme for proteins that have been inactivated by oxidation. Catalyzes the reversible oxidation-reduction of methionine sulfoxide in proteins to methionine. This chain is Peptide methionine sulfoxide reductase MsrA, found in Listeria innocua serovar 6a (strain ATCC BAA-680 / CLIP 11262).